Consider the following 270-residue polypeptide: Phospholysine phosphohistidine inorganic pyrophosphate phosphatase (270 aa).

Mg(2+) is bound by residues aspartate 17 and serine 19. Substrate is bound by residues 17-19 (DIS), 54-55 (TN), and lysine 189. Aspartate 214 is a Mg(2+) binding site.

This sequence belongs to the HAD-like hydrolase superfamily. As to quaternary structure, homodimer. It depends on Mg(2+) as a cofactor.

The protein localises to the cytoplasm. It localises to the nucleus. The catalysed reaction is diphosphate + H2O = 2 phosphate + H(+). Its function is as follows. Phosphatase that hydrolyzes imidodiphosphate, 3-phosphohistidine and 6-phospholysine. Has broad substrate specificity and can also hydrolyze inorganic diphosphate, but with lower efficiency. This chain is Phospholysine phosphohistidine inorganic pyrophosphate phosphatase (Lhpp), found in Rattus norvegicus (Rat).